A 342-amino-acid polypeptide reads, in one-letter code: MKALAKLERAPGLTLTRVKRPEVGHNDVLIKIRRTAICGTDIHIWKWDDWAQKTIPVPMHVGHEYVGEIVEMGQEVRGFAIGDRVSGEGHITCGFCRNCRAGRRHLCRNTVGVGVNREGAFAEYLAIPAFNAFKIPPEISDDLASIFDPFGNATHTALSFNLVGEDVLITGAGPIGIMAVAIAKHVGARNVVITDINDYRLELARKMGATRAVNVARESLRDVMADLRMTEGFDVGLEMSGVPSAFTSLLEAMNHGGKVALLGIPPAQTAIDWNQVIFKGLEIKGIYGREMFETWYKMVAMLQSGLDLSPIITHRFAADDYEKGFAAMLSGESGKVILDWTV.

Cys38 serves as a coordination point for Zn(2+). Residues Thr40 and His43 each act as charge relay system in the active site. Zn(2+) is bound by residues His63, Glu64, Cys93, Cys96, Cys99, and Cys107. NAD(+) is bound by residues Ile175, Asp195, Arg200, 262 to 264, and 286 to 287; these read LGI and IY.

This sequence belongs to the zinc-containing alcohol dehydrogenase family. As to quaternary structure, homotetramer. Requires Zn(2+) as cofactor.

The protein resides in the cytoplasm. The enzyme catalyses L-threonine + NAD(+) = (2S)-2-amino-3-oxobutanoate + NADH + H(+). Its pathway is amino-acid degradation; L-threonine degradation via oxydo-reductase pathway; glycine from L-threonine: step 1/2. Its function is as follows. Catalyzes the NAD(+)-dependent oxidation of L-threonine to 2-amino-3-ketobutyrate. In Burkholderia multivorans (strain ATCC 17616 / 249), this protein is L-threonine 3-dehydrogenase.